Reading from the N-terminus, the 340-residue chain is Phosphate acyltransferase (340 aa).

This sequence belongs to the PlsX family. Homodimer. Probably interacts with PlsY.

It is found in the cytoplasm. The enzyme catalyses a fatty acyl-[ACP] + phosphate = an acyl phosphate + holo-[ACP]. It participates in lipid metabolism; phospholipid metabolism. In terms of biological role, catalyzes the reversible formation of acyl-phosphate (acyl-PO(4)) from acyl-[acyl-carrier-protein] (acyl-ACP). This enzyme utilizes acyl-ACP as fatty acyl donor, but not acyl-CoA. In Nitrosococcus oceani (strain ATCC 19707 / BCRC 17464 / JCM 30415 / NCIMB 11848 / C-107), this protein is Phosphate acyltransferase.